The chain runs to 182 residues: Large ribosomal subunit protein uL5c (182 aa).

This sequence belongs to the universal ribosomal protein uL5 family. Part of the 50S ribosomal subunit; contacts the 5S rRNA.

It localises to the plastid. It is found in the chloroplast. Binds 5S rRNA, forms part of the central protuberance of the 50S subunit. The protein is Large ribosomal subunit protein uL5c (rpl5) of Cyanidium caldarium (Red alga).